The primary structure comprises 397 residues: Phosphoglycerate kinase (397 aa).

Substrate contacts are provided by residues 21-23 (DFN), Arg37, 60-63 (HLGR), Arg119, and Arg152. ATP contacts are provided by residues Lys203, Gly294, Glu325, and 354 to 357 (GGDS).

Belongs to the phosphoglycerate kinase family. As to quaternary structure, monomer.

It is found in the cytoplasm. It carries out the reaction (2R)-3-phosphoglycerate + ATP = (2R)-3-phospho-glyceroyl phosphate + ADP. It participates in carbohydrate degradation; glycolysis; pyruvate from D-glyceraldehyde 3-phosphate: step 2/5. The protein is Phosphoglycerate kinase of Chlorobium luteolum (strain DSM 273 / BCRC 81028 / 2530) (Pelodictyon luteolum).